A 350-amino-acid chain; its full sequence is Phenylalanine--tRNA ligase alpha subunit (350 aa).

Glu-260 provides a ligand contact to Mg(2+).

It belongs to the class-II aminoacyl-tRNA synthetase family. Phe-tRNA synthetase alpha subunit type 1 subfamily. As to quaternary structure, tetramer of two alpha and two beta subunits. The cofactor is Mg(2+).

It localises to the cytoplasm. The enzyme catalyses tRNA(Phe) + L-phenylalanine + ATP = L-phenylalanyl-tRNA(Phe) + AMP + diphosphate + H(+). This Mesoplasma florum (strain ATCC 33453 / NBRC 100688 / NCTC 11704 / L1) (Acholeplasma florum) protein is Phenylalanine--tRNA ligase alpha subunit.